Consider the following 475-residue polypeptide: Ribulose bisphosphate carboxylase large chain (475 aa).

Positions 1-2 are excised as a propeptide; that stretch reads MS. Pro-3 bears the N-acetylproline mark. The residue at position 14 (Lys-14) is an N6,N6,N6-trimethyllysine. Residues Asn-123 and Thr-173 each coordinate substrate. The active-site Proton acceptor is Lys-175. Lys-177 contacts substrate. Residues Lys-201, Asp-203, and Glu-204 each contribute to the Mg(2+) site. Lys-201 bears the N6-carboxylysine mark. His-294 (proton acceptor) is an active-site residue. The substrate site is built by Arg-295, His-327, and Ser-379.

Belongs to the RuBisCO large chain family. Type I subfamily. Heterohexadecamer of 8 large chains and 8 small chains; disulfide-linked. The disulfide link is formed within the large subunit homodimers. Mg(2+) is required as a cofactor. The disulfide bond which can form in the large chain dimeric partners within the hexadecamer appears to be associated with oxidative stress and protein turnover.

Its subcellular location is the plastid. It is found in the chloroplast. The catalysed reaction is 2 (2R)-3-phosphoglycerate + 2 H(+) = D-ribulose 1,5-bisphosphate + CO2 + H2O. It carries out the reaction D-ribulose 1,5-bisphosphate + O2 = 2-phosphoglycolate + (2R)-3-phosphoglycerate + 2 H(+). Its function is as follows. RuBisCO catalyzes two reactions: the carboxylation of D-ribulose 1,5-bisphosphate, the primary event in carbon dioxide fixation, as well as the oxidative fragmentation of the pentose substrate in the photorespiration process. Both reactions occur simultaneously and in competition at the same active site. In Citrus sinensis (Sweet orange), this protein is Ribulose bisphosphate carboxylase large chain.